Reading from the N-terminus, the 587-residue chain is L-ornithine N(5)-monooxygenase (587 aa).

FAD is bound by residues 53–61 (EKHTSFQWH) and Q72. K77 contacts substrate. Residue 235-238 (GGQS) coordinates NADP(+). Substrate is bound by residues 282-285 (NEVF) and N312. 312–314 (NYS) serves as a coordination point for NADP(+). Positions 488 to 511 (DNSAASGVSGASTPLTSPSEEEGK) are disordered. A compositionally biased stretch (polar residues) spans 491-505 (AASGVSGASTPLTSP). 567 to 569 (TLL) is an FAD binding site. S570 contacts substrate.

Belongs to the lysine N(6)-hydroxylase/L-ornithine N(5)-oxygenase family. In terms of assembly, homotetramer. It depends on FAD as a cofactor.

The enzyme catalyses L-ornithine + NADPH + O2 = N(5)-hydroxy-L-ornithine + NADP(+) + H2O. The catalysed reaction is L-ornithine + NADH + O2 = N(5)-hydroxy-L-ornithine + NAD(+) + H2O. It participates in siderophore biosynthesis; ferrichrome biosynthesis. Its function is as follows. L-ornithine N(5)-monooxygenase; part of the siderophore biosynthetic pathway. Omphalotus olearius produces ferrichrome A, but no other siderophore has been detected. Ferrichrome A consists of a hexapeptide ring made up of one glycine, two serine, and three N(5)-hydroxyornithine amino acid residues, the latter acylated by trans-(alpha-methyl)-glutaconic acid residues. The biosynthesis of ferrichrome A depends on the hydroxylation of ornithine to N(5)-hydroxyornithine, catalyzed by the monooxygenase omo1. The second step, the acylation of N(5)-hydroxy-L-ornithine is probably catalyzed by the N-acyltransferase ato1. Finally, assembly of ferrichrome A is catalyzed by the nonribosomal peptide synthase (NRPS) fso1. This is L-ornithine N(5)-monooxygenase from Omphalotus olearius (Jack o'lantern).